The chain runs to 1075 residues: Carbamoyl phosphate synthase large chain (1075 aa).

The carboxyphosphate synthetic domain stretch occupies residues 2 to 403 (PKRTDIKSIL…SLQKALRGLE (402 aa)). Positions 129, 169, 175, 176, 208, 210, 215, 241, 242, 243, 285, and 299 each coordinate ATP. In terms of domain architecture, ATP-grasp 1 spans 133–328 (DIAMKKIGLD…IAKVAAKLAV (196 aa)). Mg(2+)-binding residues include Gln-285, Glu-299, and Asn-301. Mn(2+) contacts are provided by Gln-285, Glu-299, and Asn-301. The tract at residues 404–553 (VGATGFDPKV…YSTYEDECEA (150 aa)) is oligomerization domain. A carbamoyl phosphate synthetic domain region spans residues 554 to 936 (NPSIDRDKIM…AFAKAQLGSN (383 aa)). In terms of domain architecture, ATP-grasp 2 spans 679-870 (QHAVDRLKLK…LAKVAARVMA (192 aa)). The ATP site is built by Arg-715, Arg-754, Leu-756, Glu-761, Gly-786, Val-787, His-788, Ser-789, Gln-829, and Glu-841. Mg(2+) is bound by residues Gln-829, Glu-841, and Asn-843. Gln-829, Glu-841, and Asn-843 together coordinate Mn(2+). In terms of domain architecture, MGS-like spans 937–1075 (STMKKQGRAL…QEMHAQIKKS (139 aa)). The allosteric domain stretch occupies residues 937–1075 (STMKKQGRAL…QEMHAQIKKS (139 aa)).

This sequence belongs to the CarB family. Composed of two chains; the small (or glutamine) chain promotes the hydrolysis of glutamine to ammonia, which is used by the large (or ammonia) chain to synthesize carbamoyl phosphate. Tetramer of heterodimers (alpha,beta)4. The cofactor is Mg(2+). It depends on Mn(2+) as a cofactor.

The catalysed reaction is hydrogencarbonate + L-glutamine + 2 ATP + H2O = carbamoyl phosphate + L-glutamate + 2 ADP + phosphate + 2 H(+). It catalyses the reaction hydrogencarbonate + NH4(+) + 2 ATP = carbamoyl phosphate + 2 ADP + phosphate + 2 H(+). It functions in the pathway amino-acid biosynthesis; L-arginine biosynthesis; carbamoyl phosphate from bicarbonate: step 1/1. It participates in pyrimidine metabolism; UMP biosynthesis via de novo pathway; (S)-dihydroorotate from bicarbonate: step 1/3. Functionally, large subunit of the glutamine-dependent carbamoyl phosphate synthetase (CPSase). CPSase catalyzes the formation of carbamoyl phosphate from the ammonia moiety of glutamine, carbonate, and phosphate donated by ATP, constituting the first step of 2 biosynthetic pathways, one leading to arginine and/or urea and the other to pyrimidine nucleotides. The large subunit (synthetase) binds the substrates ammonia (free or transferred from glutamine from the small subunit), hydrogencarbonate and ATP and carries out an ATP-coupled ligase reaction, activating hydrogencarbonate by forming carboxy phosphate which reacts with ammonia to form carbamoyl phosphate. The polypeptide is Carbamoyl phosphate synthase large chain (Salmonella typhimurium (strain LT2 / SGSC1412 / ATCC 700720)).